Consider the following 83-residue polypeptide: Small ribosomal subunit protein bS20 (83 aa).

Residues 60 to 83 are disordered; it reads ASKGLIHKNKASRDKSRLAAKLAN.

Belongs to the bacterial ribosomal protein bS20 family.

In terms of biological role, binds directly to 16S ribosomal RNA. This is Small ribosomal subunit protein bS20 from Streptococcus thermophilus (strain CNRZ 1066).